The chain runs to 522 residues: Perilipin-1 (522 aa).

At Ser-81 the chain carries Phosphoserine. Phosphothreonine is present on Thr-85. Phosphoserine is present on residues Ser-126, Ser-130, Ser-132, Ser-137, and Ser-174. Disordered stretches follow at residues Asp-195 to Ser-217 and Leu-287 to Lys-318. Residues Gln-291–Thr-314 are compositionally biased toward acidic residues. A required for interaction with CIDEC region spans residues Gln-291 to Phe-319. Phosphothreonine is present on residues Thr-299 and Thr-301. Phosphoserine occurs at positions 382, 384, and 408. Positions Glu-413–Ser-522 are disordered. Basic and acidic residues predominate over residues Ser-414–Ala-435. 3 positions are modified to phosphoserine: Ser-436, Ser-497, and Ser-499.

Belongs to the perilipin family. As to quaternary structure, interacts with ABHD5. Interacts with CIDEC. Interacts with AQP7. Post-translationally, major cAMP-dependent protein kinase-substrate in adipocytes, also dephosphorylated by PP1. When phosphorylated, may be maximally sensitive to HSL and when unphosphorylated, may play a role in the inhibition of lipolysis, by acting as a barrier in lipid droplet. As to expression, detected in adipocytes from white adipose tissue (at protein level). Detected in visceral adipose tissue and mammary gland.

The protein localises to the endoplasmic reticulum. Its subcellular location is the lipid droplet. Modulator of adipocyte lipid metabolism. Coats lipid storage droplets to protect them from breakdown by hormone-sensitive lipase (HSL). Its absence may result in leanness. Plays a role in unilocular lipid droplet formation by activating CIDEC. Their interaction promotes lipid droplet enlargement and directional net neutral lipid transfer. May modulate lipolysis and triglyceride levels. The sequence is that of Perilipin-1 (PLIN1) from Homo sapiens (Human).